The chain runs to 316 residues: Cuticle collagen 12 (316 aa).

Positions 1–36 (MTEDPKQIAQETESLRKVAFFGIAVSTIATLTAIIA) are cleaved as a signal peptide. Low complexity-rich tracts occupy residues 127–157 (SGAA…PGQD) and 183–204 (APGQ…GAAL). The disordered stretch occupies residues 127 to 316 (SGAAGPAGSP…CPPPRTAPGY (190 aa)). Triple-helical region stretches follow at residues 128–157 (GAAG…PGQD), 176–202 (GPPG…SGGA), 206–235 (GPPG…PGQV), 240–266 (GTPG…AGSS), and 269–304 (GGPG…EGAC). Residues 205 to 217 (PGPPGPAGPPGPA) show a composition bias toward pro residues. A compositionally biased stretch (low complexity) spans 219 to 234 (QPGSNGNAGAPGAPGQ). Residues 241-251 (TPGPAGPPGSP) show a composition bias toward pro residues. Composition is skewed to low complexity over residues 256–266 (APGQPGQAGSS) and 276–295 (DAGA…PGQD). The span at 307 to 316 (CPPPRTAPGY) shows a compositional bias: pro residues.

Belongs to the cuticular collagen family. As to quaternary structure, collagen polypeptide chains are complexed within the cuticle by disulfide bonds and other types of covalent cross-links.

Nematode cuticles are composed largely of collagen-like proteins. The cuticle functions both as an exoskeleton and as a barrier to protect the worm from its environment. This is Cuticle collagen 12 (col-12) from Caenorhabditis elegans.